The sequence spans 145 residues: MKILSRDKVALKVATAGTVAVGGLAFSLSFTALSELSAANGVAQSWMVPLVIDGGILVATMATVALSRHGWYAWALLILSSLMSVAGNVAHAQPHGLIAMVIAAIPPLWLLASTHLTVLLYREAQESGSESISEPLLTRGFAEAA.

In terms of biological role, putative excisionase. The sequence is that of Gene 34.1 protein (34.1) from Mycobacterium (Mycobacteriophage D29).